We begin with the raw amino-acid sequence, 169 residues long: MFVAIGSTNKAKVEAVKEALKIIGLNADVISVNVESGVSSQPFCHETFVGAKNRAYNALNATNADIGIGIEGGICYYENKYLAFAVVYAANKEGLENFSFSMAFSLPYSMVKHILEGRELGEATDLIFSTKDSKQHEGAIGYLTKVITRKELYIQPVIAALYPFYNKIE.

7–12 (STNKAK) contacts substrate. A Mg(2+)-binding site is contributed by E35.

The protein belongs to the YjjX NTPase family. As to quaternary structure, homodimer. The cofactor is Mg(2+). Mn(2+) serves as cofactor.

The enzyme catalyses XTP + H2O = XDP + phosphate + H(+). It catalyses the reaction ITP + H2O = IDP + phosphate + H(+). Its function is as follows. Phosphatase that hydrolyzes non-canonical purine nucleotides such as XTP and ITP to their respective diphosphate derivatives. Probably excludes non-canonical purines from DNA/RNA precursor pool, thus preventing their incorporation into DNA/RNA and avoiding chromosomal lesions. The sequence is that of Probable inosine/xanthosine triphosphatase from Sulfurisphaera tokodaii (strain DSM 16993 / JCM 10545 / NBRC 100140 / 7) (Sulfolobus tokodaii).